A 311-amino-acid chain; its full sequence is Transcriptional repressor scratch 2 (311 aa).

The SNAG domain stretch occupies residues 1–20 (MPRSFLVKKIKADGFQCSGV). Disordered stretches follow at residues 71 to 90 (PAYP…PQSS) and 120 to 156 (RRRA…ATAG). Over residues 124–146 (GAGGDAAGAGDAGGGGGGGGGGE) the composition is skewed to gly residues. 4 consecutive C2H2-type zinc fingers follow at residues 161-183 (HACA…KQTH), 192-214 (RKCP…VLTH), 218-240 (HKCG…MRSH), and 246-268 (FGCA…MQTH). A C2H2-type 5; atypical zinc finger spans residues 274–297 (YRCRQCDKSFALKSYLHKHCEAAC).

This sequence belongs to the snail C2H2-type zinc-finger protein family.

Its subcellular location is the nucleus. In terms of biological role, may be involved in transcriptional regulation. The polypeptide is Transcriptional repressor scratch 2 (Scrt2) (Mus musculus (Mouse)).